The sequence spans 122 residues: Large ribosomal subunit protein uL14 (122 aa).

Belongs to the universal ribosomal protein uL14 family. As to quaternary structure, part of the 50S ribosomal subunit. Forms a cluster with proteins L3 and L19. In the 70S ribosome, L14 and L19 interact and together make contacts with the 16S rRNA in bridges B5 and B8.

Its function is as follows. Binds to 23S rRNA. Forms part of two intersubunit bridges in the 70S ribosome. The protein is Large ribosomal subunit protein uL14 of Chromobacterium violaceum (strain ATCC 12472 / DSM 30191 / JCM 1249 / CCUG 213 / NBRC 12614 / NCIMB 9131 / NCTC 9757 / MK).